Here is a 487-residue protein sequence, read N- to C-terminus: Beta-barrel assembly-enhancing protease (487 aa).

The N-terminal stretch at 1–27 (MFRQLKKNLVATLIAAMTIGQVAPAFA) is a signal peptide. Residue His-136 participates in Zn(2+) binding. Residue Glu-137 is part of the active site. His-140 and Glu-201 together coordinate Zn(2+). Asp-205 (proton donor) is an active-site residue. TPR repeat units follow at residues 309 to 342 (RAAQ…EPGN), 344 to 376 (WYLD…RTNP), 377 to 409 (VLQL…NKDD), and 427 to 460 (DQEL…VKLG).

It belongs to the peptidase M48 family. BepA subfamily. Requires Zn(2+) as cofactor.

The protein localises to the periplasm. Functions both as a chaperone and a metalloprotease. Maintains the integrity of the outer membrane by promoting either the assembly or the elimination of outer membrane proteins, depending on their folding state. This chain is Beta-barrel assembly-enhancing protease, found in Escherichia coli O157:H7.